The primary structure comprises 633 residues: Guanylate-binding protein 6 (633 aa).

The segment at 1 to 310 is GTPase domain (Globular); sequence MESGPKMLAP…EAVNSGAVPC (310 aa). The 243-residue stretch at 35 to 277 folds into the GB1/RHD3-type G domain; it reads SQPVVVVAIV…FSSYIFTHAR (243 aa). GTP contacts are provided by residues 45–52, 67–69, and 97–101; these read GLYRTGKS, LGS, and DTEGL.

The protein belongs to the TRAFAC class dynamin-like GTPase superfamily. GB1/RHD3 GTPase family. GB1 subfamily.

Its subcellular location is the cytoplasmic vesicle. The catalysed reaction is GTP + H2O = GDP + phosphate + H(+). In terms of biological role, interferon (IFN)-inducible GTPase that plays important roles in innate immunity against a diverse range of bacterial, viral and protozoan pathogens, such as bacterial pathogens Listeria monocytogenes and Mycobacterium bovis BCG as well as the protozoan pathogen Toxoplasma gondii. Confers protection to several pathogens, including the bacterial pathogens Listeria monocytogenes and Mycobacterium bovis BCG as well as the protozoan pathogen Toxoplasma gondii. The protein is Guanylate-binding protein 6 (GBP6) of Pongo abelii (Sumatran orangutan).